The primary structure comprises 1370 residues: MAYSIANNQLLRQNFAKIKKIIDIPNLIDIQKNSYKRFLQIDTPPEARKNSGLEAVFKSVFPIKDFSDTASLEYVSYSLGTPKYDVEECHQRGMTFAAPMKVKVRLVVWDVNKDTGVRSIRDIKEQEVYFGEIPLMTENGTFIINGTERVIVSQLHRSPGVFYDHDKGKTHSSGKVLYSARVIPYRGSWLDFEFDHKDILYVRIDRRRKMPATVLLKALGNSAEELLNFYYRSEEIGLDGERMWKKADAELLTTQKTSSDIVDSKTGEVIIKANRKFTKAAIRKMTEHGITEIPIKAEEVCGKYASTDIVDPATGEVLVECNEEISQAKLDEIKARGISEFKVLFIDNLHVTSSLRDTLLVDKINTTDDALIEIYRRLRPGDPPTLKSAQALFDNLFFNAERYDLSAVGRLKLNYKLGLGVPLDCQVLTKEDILEVVRYLIDLKNGRGTIDDIDHLGNRRVRAVGELLENQYRIGLVRMERAIKERMSLQEVENLMPHDLINSKPVSAVVKEFFGSSQLSQFMDQTNPLSEVTHKRRLSALGPGGLTRERAGFEVRDVHPTHYGRVCPIETPEGPNIGLIASLSTYARINEHGFVETPYRIVSEGKVTAEVKFFSALEEEGHAIAQANAEMDADGRFVNDYVSARKSGEFLLVHRDELELMDVAPMQLVSVAASLIPFLENDDANRALMGSNMQRQAVPLLKADSPLVGTGMERVVAKDSGVSVVARHTGVVESVDASRIVVKIDEDEYDETGTGVDIYNLIKFARSNQNTCINQRPVVKVGDHVKRGDVIADGPSTDMGELALGQNVVVAFMPWGGYNFEDSILISEKLTKDDRYTSIHIEEFECVARDTKLGKEEITSDIPNLGEETLKDLDESGIIRIGAEVKPGDIMVGKITPKGETQLSPEEKLLRAIFGEKAGDVRDTSLRVPPGVEGTVIGAKVFSRKGNDKDSRTEMIERMEEEKLRKDEQDEIRIIRDSAVGKLKRLLVGKTAAVKVEDKNGKTVIAKDAAITEEALTAIPLDRWDEISVSGGEGVEEKVAAILATLQQQIDIIKYVFDDKVQKLKRGDDLPPGVIKMVKVYIAIKRKLQVGDKMAGRHGNKGVVSRILPEEDMPYMEDGRPVEIVLNPLGVPSRMNVGQILETHLGWAAKGIGWKIEEMLEKHSPSATIKEYLQKVYGSKEMNAFLDSLNEEELINVAKRLQRGVPMASPVFEGASEEQIRSMLDKAGFDETAQVRLFDGKTGEPFKHKVTVGVMYVLKLHHLVDDKIHARSIGPYSLVTQQPLGGKAQFGGQRLGEMEVWAMEAYGAAYALQEFLTVKSDDVAGRTRMYEAIVKGKHTLEPGLPESFNVLIKELQSLCLDVELLEGDED.

The protein belongs to the RNA polymerase beta chain family. The RNAP catalytic core consists of 2 alpha, 1 beta, 1 beta' and 1 omega subunit. When a sigma factor is associated with the core the holoenzyme is formed, which can initiate transcription.

The catalysed reaction is RNA(n) + a ribonucleoside 5'-triphosphate = RNA(n+1) + diphosphate. In terms of biological role, DNA-dependent RNA polymerase catalyzes the transcription of DNA into RNA using the four ribonucleoside triphosphates as substrates. In Geobacter metallireducens (strain ATCC 53774 / DSM 7210 / GS-15), this protein is DNA-directed RNA polymerase subunit beta.